The sequence spans 371 residues: Putative glutamate--cysteine ligase 2 (371 aa).

The protein belongs to the glutamate--cysteine ligase type 2 family. YbdK subfamily.

The catalysed reaction is L-cysteine + L-glutamate + ATP = gamma-L-glutamyl-L-cysteine + ADP + phosphate + H(+). Its function is as follows. ATP-dependent carboxylate-amine ligase which exhibits weak glutamate--cysteine ligase activity. This is Putative glutamate--cysteine ligase 2 from Burkholderia lata (strain ATCC 17760 / DSM 23089 / LMG 22485 / NCIMB 9086 / R18194 / 383).